A 160-amino-acid polypeptide reads, in one-letter code: uncharacterized protein (160 aa).

This is an uncharacterized protein from Mycobacterium tuberculosis (strain CDC 1551 / Oshkosh).